Consider the following 385-residue polypeptide: Nonsense-mediated mRNA decay factor SMG9 (385 aa).

The disordered stretch occupies residues 1–32; sequence MKKVEILKTSRPSSAGGAARPSTASPTHGAPK.

It belongs to the SMG9 family.

Its function is as follows. Involved in nonsense-mediated decay (NMD) of mRNAs containing premature stop codons. Probable component of kinase complex containing smg-1 and recruited to stalled ribosomes. In Caenorhabditis elegans, this protein is Nonsense-mediated mRNA decay factor SMG9 (smg-9).